We begin with the raw amino-acid sequence, 892 residues long: DNA mismatch repair protein MutS (892 aa).

The interval 663–684 (TNTSLREAAPTTTLSTSDQGQM) is disordered. 696 to 703 (GPNASGKS) is a binding site for ATP.

This sequence belongs to the DNA mismatch repair MutS family.

Its function is as follows. This protein is involved in the repair of mismatches in DNA. It is possible that it carries out the mismatch recognition step. This protein has a weak ATPase activity. In Nostoc punctiforme (strain ATCC 29133 / PCC 73102), this protein is DNA mismatch repair protein MutS.